Consider the following 274-residue polypeptide: Large ribosomal subunit protein uL2 (274 aa).

The tract at residues 223–258 is disordered; that stretch reads VAMNPVDHPHGGGEGRTSGGRHPVTPWGIPTKGYKT.

Belongs to the universal ribosomal protein uL2 family. In terms of assembly, part of the 50S ribosomal subunit. Forms a bridge to the 30S subunit in the 70S ribosome.

One of the primary rRNA binding proteins. Required for association of the 30S and 50S subunits to form the 70S ribosome, for tRNA binding and peptide bond formation. It has been suggested to have peptidyltransferase activity; this is somewhat controversial. Makes several contacts with the 16S rRNA in the 70S ribosome. This chain is Large ribosomal subunit protein uL2, found in Geotalea daltonii (strain DSM 22248 / JCM 15807 / FRC-32) (Geobacter daltonii).